We begin with the raw amino-acid sequence, 147 residues long: Neocarzinostatin (147 aa).

A signal peptide spans 1-34 (MVPISIIRNRVAKVAVGSAAVLGLAVGFQTPAVA). 2 cysteine pairs are disulfide-bonded: C71/C81 and C122/C127.

This sequence belongs to the neocarzinostatin family.

In terms of biological role, NCS has antibiotic activity (for Gram-positive bacteria) and antitumor activity (for certain mouse tumors). NCS binds non-covalently to a chromophore which is the cytotoxic and mutagenic component of the antibiotic. The chromophore binds to DNA as a weak intercalator and causes single- and double-strand breaks. The chain is Neocarzinostatin (ncsA) from Streptomyces carzinostaticus.